A 188-amino-acid polypeptide reads, in one-letter code: dCTP deaminase (188 aa).

DCTP is bound by residues 111–116 (KSTYAR), 135–137 (TLE), Gln156, Tyr170, Lys179, and Gln180. Glu137 functions as the Proton donor/acceptor in the catalytic mechanism.

Belongs to the dCTP deaminase family. Homotrimer.

The catalysed reaction is dCTP + H2O + H(+) = dUTP + NH4(+). The protein operates within pyrimidine metabolism; dUMP biosynthesis; dUMP from dCTP (dUTP route): step 1/2. Functionally, catalyzes the deamination of dCTP to dUTP. This is dCTP deaminase from Rickettsia canadensis (strain McKiel).